We begin with the raw amino-acid sequence, 142 residues long: uncharacterized protein (142 aa).

The next 2 membrane-spanning stretches (helical) occupy residues 12-29 (NAILRPISDIFVLIYGLL) and 44-66 (IYGQLSLLLWGTKFLATILGVTA).

It localises to the cell membrane. This is an uncharacterized protein from Archaeoglobus fulgidus (strain ATCC 49558 / DSM 4304 / JCM 9628 / NBRC 100126 / VC-16).